A 422-amino-acid chain; its full sequence is MFSLHFVDEAFNEVFAGNGGHGIVAFRREKYVAFGGPAGGNGGKGGSVIFVGDKDETTLLKLKYQKHLKAPHGINGKNKGQNGANAPHLYVKVPLGTVFYTADNKFLGEILYDQQTLVIAKGGKGGKGNKALATFKNQAPSYAEKGDLGESFKIKTELKVLADIGLLGFPSVGKSSLISAISKAQPKVASYPFTTIKPHLGVVEVDGFSFVVADLPGLIANAHLGCGMGIQFLKHIERCRVLVHILSMESANPYQDFQTLNQELSQYNPQLLLKKQIIVTNKMDLPDALQKLTLLKQQIKDQPIIPLSLVSFDNLETLKYEMSSLLQNTPLEVAPNKNNDFKLYTLPDNQNTISVIKESDSVFVVSGKQVETFFHRTDFNNEEAVKRFNRILKKIGMEEQLQKQGAKPGDQVKICDRLFYFL.

The Obg domain occupies 4-161 (LHFVDEAFNE…FKIKTELKVL (158 aa)). The region spanning 162–327 (ADIGLLGFPS…LKYEMSSLLQ (166 aa)) is the OBG-type G domain. GTP is bound by residues 168–175 (GFPSVGKS), 193–197 (FTTIK), 214–217 (DLPG), 281–284 (NKMD), and 308–310 (SLV). Mg(2+) is bound by residues S175 and T195. Residues 345-422 (TLPDNQNTIS…KICDRLFYFL (78 aa)) enclose the OCT domain.

This sequence belongs to the TRAFAC class OBG-HflX-like GTPase superfamily. OBG GTPase family. Monomer. It depends on Mg(2+) as a cofactor.

It is found in the cytoplasm. Its function is as follows. An essential GTPase which binds GTP, GDP and possibly (p)ppGpp with moderate affinity, with high nucleotide exchange rates and a fairly low GTP hydrolysis rate. Plays a role in control of the cell cycle, stress response, ribosome biogenesis and in those bacteria that undergo differentiation, in morphogenesis control. This is GTPase Obg from Onion yellows phytoplasma (strain OY-M).